The primary structure comprises 232 residues: MTKHGKRIRGIQETYDLAKSYSLGEAIDILKQCPTVRFDQTVDVSVKLGIDPRKSDQQIRGSVSLPHGTGKVLRILVFAAGDKAAEAIEAGADFVGSDDLVEKIKGGWVDFDVAVATPDMMREVGKLGKVLGPRNLMPTPKAGTVTTDVVKTVAELRKGKIEFKADRAGVCNVGVAKLSFDSAQIKENVEALCAALVKAKPATAKGQYLVNFTISSTMGPGVTVDTRELIAL.

Belongs to the universal ribosomal protein uL1 family. Part of the 50S ribosomal subunit.

Binds directly to 23S rRNA. The L1 stalk is quite mobile in the ribosome, and is involved in E site tRNA release. In terms of biological role, protein L1 is also a translational repressor protein, it controls the translation of the L11 operon by binding to its mRNA. This Chlamydia trachomatis serovar D (strain ATCC VR-885 / DSM 19411 / UW-3/Cx) protein is Large ribosomal subunit protein uL1.